The primary structure comprises 433 residues: ATP-sensitive inward rectifier potassium channel 12 (433 aa).

At 1 to 77 (MTAASRANPY…LADMFTTCVD (77 aa)) the chain is on the cytoplasmic side. Cysteine 75 is subject to S-nitrosocysteine. The helical transmembrane segment at 78 to 104 (IRWRYMLLIFSLAFLASWLLFGIIFWV) threads the bilayer. A 1,2-diacyl-sn-glycero-3-phospho-(1D-myo-inositol-4,5-bisphosphate) is bound by residues arginine 79 and arginine 81. At 105–129 (IAVAHGDLEPAEGRGRTPCVMQVHG) the chain is on the extracellular side. A disulfide bond links cysteine 123 and cysteine 155. An intramembrane region (helical; Pore-forming) is located at residues 130 to 146 (FMAAFLFSIETQTTIGY). The K(+) site is built by threonine 143, isoleucine 144, glycine 145, and tyrosine 146. The Selectivity filter signature appears at 143–148 (TIGYGL). The Extracellular portion of the chain corresponds to 147 to 155 (GLRCVTEEC). A helical membrane pass occupies residues 156-183 (PVAVFMVVAQSIVGCIIDSFMIGAIMAK). The a 1,2-diacyl-sn-glycero-3-phospho-(1D-myo-inositol-4,5-bisphosphate) site is built by lysine 183 and lysine 188. The Cytoplasmic segment spans residues 184–433 (MARPKKRAQT…QRPYRRESEI (250 aa)). Positions 387-433 (DEEDEADGDQDGRSRDGLSPQARHDFDRLQAGGGVLEQRPYRRESEI) are disordered. Residues 396 to 414 (QDGRSRDGLSPQARHDFDR) are compositionally biased toward basic and acidic residues. Residues 431–433 (SEI) carry the PDZ-binding motif.

This sequence belongs to the inward rectifier-type potassium channel (TC 1.A.2.1) family. KCNJ12 subfamily. As to quaternary structure, homotetramer. Forms heteromer with KCNJ4. Can form heteromeric channels with Kir2.6/KCNJ18. Association, via its PDZ-recognition domain, with LIN7A, LIN7B, LIN7C, DLG1, CASK and APBA1 plays a key role in its localization and trafficking.

It localises to the membrane. Its subcellular location is the cell membrane. It is found in the sarcolemma. The protein localises to the T-tubule. It catalyses the reaction K(+)(in) = K(+)(out). Activated by phosphatidylinositol 4,5-biphosphate (PtdIns(4,5)P2). PtdIns(4,5)P2 binding to the cytoplasmic side of the channel triggers a conformation change leading to channel opening. Inhibited by Ba(2+). Functionally, inward rectifying potassium channel that probably participates in controlling the resting membrane potential in electrically excitable cells. Probably participates in establishing action potential waveform and excitability of neuronal and muscle tissues. Inward rectifier potassium channels are characterized by a greater tendency to allow potassium to flow into the cell rather than out of it. Their voltage dependence is regulated by the concentration of extracellular potassium; as external potassium is raised, the voltage range of the channel opening shifts to more positive voltages. The inward rectification is mainly due to the blockage of outward current by internal magnesium. The sequence is that of ATP-sensitive inward rectifier potassium channel 12 (KCNJ12) from Homo sapiens (Human).